The chain runs to 642 residues: Transmembrane 9 superfamily member 4 (642 aa).

A signal peptide spans 1-23 (MATAMDWLPWSLLLFSLMCETSA). Residues 24–281 (FYVPGVAPIN…TMSDVQIHWF (258 aa)) are Extracellular-facing. Residues 282–302 (SIINSVVVVFFLSGILSMIII) form a helical membrane-spanning segment. The Cytoplasmic portion of the chain corresponds to 303–346 (RTLRKDIANYNKEDDIEDTMEESGWKLVHGDVFRPPQYPMILSS). Position 312 is a phosphotyrosine (tyrosine 312). The helical transmembrane segment at 347-367 (LLGSGIQLFCMILIVIFVAML) threads the bilayer. Over 368–376 (GMLSPSSRG) the chain is Extracellular. A helical transmembrane segment spans residues 377-397 (ALMTTACFLFMFMGVFGGFSA). At 398–416 (GRLYRTLKGHRWKKGAFCT) the chain is on the cytoplasmic side. A helical membrane pass occupies residues 417 to 437 (ATLYPGVVFGICFVLNCFIWG). Over 438–449 (KHSSGAVPFPTM) the chain is Extracellular. A helical membrane pass occupies residues 450-470 (VALLCMWFGISLPLVYLGYYF). The Cytoplasmic segment spans residues 471-501 (GFRKQPYDNPVRTNQIPRQIPEQRWYMNRFV). A helical membrane pass occupies residues 502–522 (GILMAGILPFGAMFIELFFIF). Topologically, residues 523–535 (SAIWENQFYYLFG) are extracellular. A helical membrane pass occupies residues 536–556 (FLFLVFIILVVSCSQISIVMV). Residues 557-570 (YFQLCAEDYRWWWR) lie on the Cytoplasmic side of the membrane. A helical membrane pass occupies residues 571 to 591 (NFLVSGGSAFYVLVYAIFYFV). The Extracellular portion of the chain corresponds to 592–598 (NKLDIVE). Residues 599-619 (FIPSLLYFGYTALMVLSFWLL) traverse the membrane as a helical segment. Over 620–642 (TGTIGFYAAYMFVRKIYAAVKID) the chain is Cytoplasmic.

The protein belongs to the nonaspanin (TM9SF) (TC 9.A.2) family. Interacts with ATP6V1H in colon cancer cells. In terms of tissue distribution, highly expressed in metastatic melanoma cells whereas it is undetectable in primary melanoma cells, healthy skin tissues and peripheral blood lymphocytes. Expressed in CD34(+) hematopoietic progenitor cells and during monocyte and granulocyte differentiation. Overexpressed in acute myeloid leukemia, in particular in those displaying granulocytic differentiation (at protein level).

The protein localises to the membrane. It localises to the golgi apparatus. Its subcellular location is the early endosome. Functionally, associates with proteins harboring glycine-rich transmembrane domains and ensures their efficient localization to the cell surface. Regulates the assembly and activity of V-ATPase in colon cancer cells via its interaction with V-type proton ATPase subunit H (ATP6V1H) and contributes to V-ATPase-mediated pH alterations in cancer cells which play an important role in drug resistance and invasiveness of colon cancer cells. Plays an important role in an atypical phagocytic activity of metastatic melanoma cells called cannibalism and is involved in the pH regulation of the intracellular vesicles in tumor cells. The protein is Transmembrane 9 superfamily member 4 (TM9SF4) of Homo sapiens (Human).